We begin with the raw amino-acid sequence, 341 residues long: Tubulin beta chain (341 aa).

Positions 64, 68, 69, 70, 130, and 152 each coordinate GTP.

This sequence belongs to the tubulin family. As to quaternary structure, dimer of alpha and beta chains. A typical microtubule is a hollow water-filled tube with an outer diameter of 25 nm and an inner diameter of 15 nM. Alpha-beta heterodimers associate head-to-tail to form protofilaments running lengthwise along the microtubule wall with the beta-tubulin subunit facing the microtubule plus end conferring a structural polarity. Microtubules usually have 13 protofilaments but different protofilament numbers can be found in some organisms and specialized cells. Mg(2+) is required as a cofactor.

It localises to the cytoplasm. The protein resides in the cytoskeleton. Its function is as follows. Tubulin is the major constituent of microtubules, a cylinder consisting of laterally associated linear protofilaments composed of alpha- and beta-tubulin heterodimers. Microtubules grow by the addition of GTP-tubulin dimers to the microtubule end, where a stabilizing cap forms. Below the cap, tubulin dimers are in GDP-bound state, owing to GTPase activity of alpha-tubulin. In Haliotis discus (Abalone), this protein is Tubulin beta chain.